Here is a 593-residue protein sequence, read N- to C-terminus: Transmembrane 9 superfamily member 4 (593 aa).

The first 25 residues, 1–25 (MVLLPSMTSLLLVFLFLYGVSPVIS), serve as a signal peptide directing secretion. At 26–230 (DGSDHRYKVG…SMPHHLEIHW (205 aa)) the chain is on the lumenal side. A helical membrane pass occupies residues 231–251 (FSIINSCVTVLLLTGFLATIL). Topologically, residues 252 to 303 (MRVLKNDFVKYAHDEEAVDDQEETGWKLIHGDVFRFPKHKSLLAAALGSGTQ) are cytoplasmic. A helical transmembrane segment spans residues 304 to 324 (LFTLAVFIFMLALVGVFYPYN). Residues 325 to 326 (RG) are Lumenal-facing. The helical transmembrane segment at 327–347 (ALFTALVVIYALTSGIAGYTA) threads the bilayer. Residues 348 to 366 (ASFYCQLEGTNWVRNVILT) lie on the Cytoplasmic side of the membrane. The chain crosses the membrane as a helical span at residues 367–387 (GSLFCGPLLITFSFLNTVAIA). The Lumenal segment spans residues 388–398 (YQATAALPFGT). The chain crosses the membrane as a helical span at residues 399-419 (IVVIFLIWALVTSPLLILGGI). At 420 to 453 (AGKNRKSEFQAPCRTTKYPREIPPMRWYRRTLPQ) the chain is on the cytoplasmic side. A helical transmembrane segment spans residues 454 to 474 (MAMAGFLPFSAIYIELYYIFA). The Lumenal portion of the chain corresponds to 475–486 (SVWGHRIYTIYS). Residues 487 to 507 (ILSIVFLILVIVTAFITVALT) form a helical membrane-spanning segment. The Cytoplasmic portion of the chain corresponds to 508–522 (YFQLAAEDHEWWWRS). The helical transmembrane segment at 523-543 (LLCGGSTGLFIYAYCLYYYYA) threads the bilayer. Residues 544–554 (RSDMSGFMQTS) lie on the Lumenal side of the membrane. A helical transmembrane segment spans residues 555–575 (FFFGYMACICYGFFLMLGTIG). At 576–593 (FCASLLFVRHIYRSIKCE) the chain is on the cytoplasmic side. The Endoplasmic reticulum export signal motif lies at 582–587 (FVRHIY). Positions 591 to 593 (KCE) match the Golgi retention signal motif.

This sequence belongs to the nonaspanin (TM9SF) (TC 9.A.2) family.

The protein resides in the endosome membrane. Its subcellular location is the golgi apparatus membrane. The polypeptide is Transmembrane 9 superfamily member 4 (Arabidopsis thaliana (Mouse-ear cress)).